We begin with the raw amino-acid sequence, 458 residues long: Phosphoglucosamine mutase (458 aa).

Catalysis depends on Ser-102, which acts as the Phosphoserine intermediate. Residues Ser-102, Asp-252, Asp-254, and Asp-256 each contribute to the Mg(2+) site. Phosphoserine is present on Ser-102.

Belongs to the phosphohexose mutase family. Mg(2+) is required as a cofactor. Activated by phosphorylation.

It carries out the reaction alpha-D-glucosamine 1-phosphate = D-glucosamine 6-phosphate. Its function is as follows. Catalyzes the conversion of glucosamine-6-phosphate to glucosamine-1-phosphate. The polypeptide is Phosphoglucosamine mutase (Anaeromyxobacter dehalogenans (strain 2CP-C)).